The sequence spans 216 residues: Orotate phosphoribosyltransferase (216 aa).

Residues Arg-101, Lys-105, His-107, and 127–135 each bind 5-phospho-alpha-D-ribose 1-diphosphate; that span reads EDLISTGGS. Ser-131 contributes to the orotate binding site.

This sequence belongs to the purine/pyrimidine phosphoribosyltransferase family. PyrE subfamily. Homodimer. It depends on Mg(2+) as a cofactor.

The catalysed reaction is orotidine 5'-phosphate + diphosphate = orotate + 5-phospho-alpha-D-ribose 1-diphosphate. It functions in the pathway pyrimidine metabolism; UMP biosynthesis via de novo pathway; UMP from orotate: step 1/2. Its function is as follows. Catalyzes the transfer of a ribosyl phosphate group from 5-phosphoribose 1-diphosphate to orotate, leading to the formation of orotidine monophosphate (OMP). The chain is Orotate phosphoribosyltransferase from Cutibacterium acnes (strain DSM 16379 / KPA171202) (Propionibacterium acnes).